We begin with the raw amino-acid sequence, 273 residues long: Tryptophan synthase alpha chain (273 aa).

Catalysis depends on proton acceptor residues E49 and D60.

It belongs to the TrpA family. In terms of assembly, tetramer of two alpha and two beta chains.

It carries out the reaction (1S,2R)-1-C-(indol-3-yl)glycerol 3-phosphate + L-serine = D-glyceraldehyde 3-phosphate + L-tryptophan + H2O. Its pathway is amino-acid biosynthesis; L-tryptophan biosynthesis; L-tryptophan from chorismate: step 5/5. Functionally, the alpha subunit is responsible for the aldol cleavage of indoleglycerol phosphate to indole and glyceraldehyde 3-phosphate. The protein is Tryptophan synthase alpha chain of Thiobacillus denitrificans (strain ATCC 25259 / T1).